The primary structure comprises 293 residues: MKFVYTPSEAAEEGVRGPSDLPKLIDKAMSLARAPVSTFKVGAVGLTSSGEVFLGVNVEFPNLPLHHTIHAEQFLVTNLALNSMKKLTHIAVSVTGTIFGAPCGHCRQFYQEMRNAPEIEILIKRPKDGIDEFMSLKSLMPERFGPDSILPEDASLLLEQRDNSLVLSDPEEICSDPEDCSHTKCRALAAANKSYAPYSKCPSGVALICGGEVYKGWYIESVAYNPSLGPVEAALVDFVARGGGKEFNEITEVVLVEMKDVKVSQEATARTFLDKIAPKCDFKVLHCYKTNKN.

2 CMP/dCMP-type deaminase domains span residues 16–147 (RGPS…FGPD) and 178–293 (EDCS…TNKN). 57–59 (NVE) serves as a coordination point for substrate. A Zn(2+)-binding site is contributed by H70. E72 (proton donor) is an active-site residue. C103 and C106 together coordinate Zn(2+).

Belongs to the cytidine and deoxycytidylate deaminase family. In terms of assembly, homodimer. Zn(2+) is required as a cofactor.

It catalyses the reaction cytidine + H2O + H(+) = uridine + NH4(+). The catalysed reaction is 2'-deoxycytidine + H2O + H(+) = 2'-deoxyuridine + NH4(+). Functionally, this enzyme scavenges exogenous and endogenous cytidine and 2'-deoxycytidine for UMP synthesis. In Arabidopsis thaliana (Mouse-ear cress), this protein is Cytidine deaminase 6 (CDA6).